We begin with the raw amino-acid sequence, 155 residues long: MALYEHVFLARQDISAQQVDALVEQYKGVIEANGGKVGRIENWGLKSLTYRIKKNRKAHYALMDIDAPAAAVQEMERQMRISEDVLRYMTIAVEKHEEGPSAMMQKRDRDDRPREGGRGPREGGFGDRDRGPRPPREGGFGDREDRPRRPREDRV.

A disordered region spans residues 94–155 (EKHEEGPSAM…RPRRPREDRV (62 aa)).

It belongs to the bacterial ribosomal protein bS6 family.

Its function is as follows. Binds together with bS18 to 16S ribosomal RNA. This Rhizobium leguminosarum bv. trifolii (strain WSM2304) protein is Small ribosomal subunit protein bS6.